Consider the following 289-residue polypeptide: Phosphatidylserine decarboxylase proenzyme (289 aa).

Catalysis depends on charge relay system; for autoendoproteolytic cleavage activity residues Asp89, His146, and Ser252. Residue Ser252 is the Schiff-base intermediate with substrate; via pyruvic acid; for decarboxylase activity of the active site. Ser252 is subject to Pyruvic acid (Ser); by autocatalysis.

It belongs to the phosphatidylserine decarboxylase family. PSD-B subfamily. Prokaryotic type I sub-subfamily. Heterodimer of a large membrane-associated beta subunit and a small pyruvoyl-containing alpha subunit. Requires pyruvate as cofactor. Post-translationally, is synthesized initially as an inactive proenzyme. Formation of the active enzyme involves a self-maturation process in which the active site pyruvoyl group is generated from an internal serine residue via an autocatalytic post-translational modification. Two non-identical subunits are generated from the proenzyme in this reaction, and the pyruvate is formed at the N-terminus of the alpha chain, which is derived from the carboxyl end of the proenzyme. The autoendoproteolytic cleavage occurs by a canonical serine protease mechanism, in which the side chain hydroxyl group of the serine supplies its oxygen atom to form the C-terminus of the beta chain, while the remainder of the serine residue undergoes an oxidative deamination to produce ammonia and the pyruvoyl prosthetic group on the alpha chain. During this reaction, the Ser that is part of the protease active site of the proenzyme becomes the pyruvoyl prosthetic group, which constitutes an essential element of the active site of the mature decarboxylase.

It localises to the cell membrane. The enzyme catalyses a 1,2-diacyl-sn-glycero-3-phospho-L-serine + H(+) = a 1,2-diacyl-sn-glycero-3-phosphoethanolamine + CO2. Its pathway is phospholipid metabolism; phosphatidylethanolamine biosynthesis; phosphatidylethanolamine from CDP-diacylglycerol: step 2/2. In terms of biological role, catalyzes the formation of phosphatidylethanolamine (PtdEtn) from phosphatidylserine (PtdSer). This is Phosphatidylserine decarboxylase proenzyme from Shewanella denitrificans (strain OS217 / ATCC BAA-1090 / DSM 15013).